The primary structure comprises 340 residues: Gigasin-2 (340 aa).

Positions 1 to 21 (MNKMSPLYVLALCCLATTVFA) are cleaved as a signal peptide. EGF-like domains lie at 22–57 (KYDCTNNGGYGCKYGGTCHFYGFCICPKGFQGEDCG) and 65–97 (TAANCTAECKNGGTCYESDRCYCPHGFIGDMCE). 6 disulfides stabilise this stretch: Cys25/Cys39, Cys33/Cys45, Cys47/Cys56, Cys69/Cys79, Cys73/Cys85, and Cys87/Cys96.

Component of the organic matrix of calcified shell layers.

The protein is Gigasin-2 of Magallana gigas (Pacific oyster).